Consider the following 378-residue polypeptide: Atypical chemokine receptor 2 (378 aa).

The Extracellular segment spans residues 1–49; it reads MPTVASPLPLTTVGSENSSSIYDYDYLDDMTILVCRKDEVLSFGRVFLP. An N-linked (GlcNAc...) asparagine glycan is attached at N17. The chain crosses the membrane as a helical span at residues 50-70; sequence VVYSLIFVLGLAGNLLLLVVL. At 71–91 the chain is on the cytoplasmic side; that stretch reads LHSAPRRRTMELYLLNLAVSN. Residues 92-112 traverse the membrane as a helical segment; sequence LLFVVTMPFWAISVAWHWVFG. Residues 113 to 117 are Extracellular-facing; sequence SFLCK. C116 and C194 are oxidised to a cystine. A helical membrane pass occupies residues 118-139; that stretch reads VISTLYSINFYCGIFFITCMSL. Residues 140–161 are Cytoplasmic-facing; that stretch reads DKYLEIVHAQPLHRPKAQFRNL. The helical transmembrane segment at 162 to 182 threads the bilayer; sequence LLIVMVWITSLAISVPEMVFV. Over 183 to 216 the chain is Extracellular; it reads QIHQTLDGVWHCYADFGGHATIWKLYLRFQLNLL. A helical membrane pass occupies residues 217–237; sequence GFLLPLLAMIFFYSRIGCVLV. Residues 238-249 are Cytoplasmic-facing; it reads RLRPPGQGRALR. The helical transmembrane segment at 250–270 threads the bilayer; sequence MAAALVIVFFMLWFPYNLTLF. Topologically, residues 271–292 are extracellular; the sequence is LHSLLDLHVFGNCEISHRLDYT. The chain crosses the membrane as a helical span at residues 293–313; it reads LQVTESLAFSHCCFTPVLYAF. At 314 to 378 the chain is on the cytoplasmic side; that stretch reads CSHRFRRYLK…SLNKGEMGNT (65 aa). The segment at 326–378 is C-terminal cytoplasmic tail; the sequence is LSVMLRWHQAPGTPSSNHSESSRVTAQEDVVSMNDLGERQSEDSLNKGEMGNT.

It belongs to the G-protein coupled receptor 1 family. Atypical chemokine receptor subfamily. Phosphorylated on serine residues in the C-terminal cytoplasmic tail. Expressed on apoptotic neutrophils (at protein level).

It is found in the early endosome. The protein resides in the recycling endosome. The protein localises to the cell membrane. Its function is as follows. Atypical chemokine receptor that controls chemokine levels and localization via high-affinity chemokine binding that is uncoupled from classic ligand-driven signal transduction cascades, resulting instead in chemokine sequestration, degradation, or transcytosis. Also known as interceptor (internalizing receptor) or chemokine-scavenging receptor or chemokine decoy receptor. Acts as a receptor for chemokines including CCL2, CCL3, CCL3L1, CCL4, CCL5, CCL7, CCL8, CCL11, CCL13, CCL17, CCL22, CCL23, CCL24, SCYA2/MCP-1, SCY3/MIP-1-alpha, SCYA5/RANTES and SCYA7/MCP-3. Upon active ligand stimulation, activates a beta-arrestin 1 (ARRB1)-dependent, G protein-independent signaling pathway that results in the phosphorylation of the actin-binding protein cofilin (CFL1) through a RAC1-PAK1-LIMK1 signaling pathway. Activation of this pathway results in up-regulation of ACKR2 from endosomal compartment to cell membrane, increasing its efficiency in chemokine uptake and degradation. By scavenging chemokines in tissues, on the surfaces of lymphatic vessels, and in placenta, plays an essential role in the resolution (termination) of the inflammatory response and in the regulation of adaptive immune responses. Plays a major role in the immune silencing of macrophages during the resolution of inflammation. Acts as a regulator of inflammatory leukocyte interactions with lymphatic endothelial cells (LECs) and is required for immature/mature dendritic cells discrimination by LECs. In Mus musculus (Mouse), this protein is Atypical chemokine receptor 2 (Ackr2).